The sequence spans 369 residues: Anthranilate phosphoribosyltransferase (369 aa).

Residues G111, 114–115 (GD), T119, 121–124 (NIST), 139–147 (KHGNRGVSS), and S151 contribute to the 5-phospho-alpha-D-ribose 1-diphosphate site. An anthranilate-binding site is contributed by G111. A Mg(2+)-binding site is contributed by S123. N142 contacts anthranilate. R197 is a binding site for anthranilate. The Mg(2+) site is built by D256 and E257.

It belongs to the anthranilate phosphoribosyltransferase family. In terms of assembly, homodimer. It depends on Mg(2+) as a cofactor.

The catalysed reaction is N-(5-phospho-beta-D-ribosyl)anthranilate + diphosphate = 5-phospho-alpha-D-ribose 1-diphosphate + anthranilate. Its pathway is amino-acid biosynthesis; L-tryptophan biosynthesis; L-tryptophan from chorismate: step 2/5. Functionally, catalyzes the transfer of the phosphoribosyl group of 5-phosphorylribose-1-pyrophosphate (PRPP) to anthranilate to yield N-(5'-phosphoribosyl)-anthranilate (PRA). This Cupriavidus pinatubonensis (strain JMP 134 / LMG 1197) (Cupriavidus necator (strain JMP 134)) protein is Anthranilate phosphoribosyltransferase.